A 450-amino-acid chain; its full sequence is Chromosomal replication initiator protein DnaA (450 aa).

Positions Met-1 to Leu-84 are domain I, interacts with DnaA modulators. Residues Leu-84–Ser-109 are domain II. Residues Asp-110–Ala-328 are domain III, AAA+ region. Gly-154, Gly-156, Lys-157, and Thr-158 together coordinate ATP. The interval Asn-329 to Lys-450 is domain IV, binds dsDNA.

Belongs to the DnaA family. In terms of assembly, oligomerizes as a right-handed, spiral filament on DNA at oriC.

The protein localises to the cytoplasm. Its function is as follows. Plays an essential role in the initiation and regulation of chromosomal replication. ATP-DnaA binds to the origin of replication (oriC) to initiate formation of the DNA replication initiation complex once per cell cycle. Binds the DnaA box (a 9 base pair repeat at the origin) and separates the double-stranded (ds)DNA. Forms a right-handed helical filament on oriC DNA; dsDNA binds to the exterior of the filament while single-stranded (ss)DNA is stabiized in the filament's interior. The ATP-DnaA-oriC complex binds and stabilizes one strand of the AT-rich DNA unwinding element (DUE), permitting loading of DNA polymerase. After initiation quickly degrades to an ADP-DnaA complex that is not apt for DNA replication. Binds acidic phospholipids. The polypeptide is Chromosomal replication initiator protein DnaA (Streptococcus equi subsp. zooepidemicus (strain MGCS10565)).